A 224-amino-acid chain; its full sequence is Inhibitor of apoptosis protein (224 aa).

Residues I29–M92 form a BIR repeat. Zn(2+)-binding residues include C62, C65, H82, and C89.

This sequence belongs to the asfivirus IAP family. As to quaternary structure, interacts with subunit p17 of host CASP3.

Its subcellular location is the host cytoplasm. It is found in the virion. Functionally, prevent apoptosis of host cell by inhibiting caspase-3/CASP3 activation to promote the viral replication. Also induces the activation of host NF-kappaB. This is Inhibitor of apoptosis protein (p27) from African swine fever virus (isolate Pig/Haiti/H811/1981) (ASFV).